The chain runs to 562 residues: Adenylate kinase isoenzyme 5 (562 aa).

2 adenylate kinase regions span residues 133–316 (KIIL…VAVD) and 377–559 (KIIF…TAID). 142–147 (GSGKGT) serves as a coordination point for ATP. Positions 162 to 193 (SVGELLRKKIHSASSNRKWSLIAKIITNGELA) are NMP 1. Residues arginine 168, 191–193 (ELA), 219–222 (GFPR), and glutamine 226 contribute to the AMP site. An LID 1 region spans residues 256–266 (KRAEQQGRPDD). Arginine 257 lines the ATP pocket. Positions 263 and 274 each coordinate AMP. 386–391 (GSGKGT) serves as a coordination point for ATP. Positions 406 to 435 (STGELLRQELTSESERSKLIRDIMERGDLV) are NMP 2. AMP-binding positions include threonine 407, arginine 412, 433-435 (DLV), 462-465 (GYPR), and glutamine 469. An LID 2 region spans residues 499 to 509 (QRSQSSQRGED). Residue arginine 500 coordinates ATP. 2 residues coordinate AMP: arginine 506 and arginine 517. Glycine 545 is an ATP binding site.

Belongs to the adenylate kinase family. In terms of assembly, monomer. Interacts with YWHAZ. As to expression, brain specific.

It localises to the cytoplasm. It catalyses the reaction AMP + ATP = 2 ADP. It carries out the reaction a 2'-deoxyribonucleoside 5'-diphosphate + ATP = a 2'-deoxyribonucleoside 5'-triphosphate + ADP. The catalysed reaction is a ribonucleoside 5'-diphosphate + ATP = a ribonucleoside 5'-triphosphate + ADP. Its function is as follows. Nucleoside monophosphate (NMP) kinase that catalyzes the reversible transfer of the terminal phosphate group between nucleoside triphosphates and monophosphates. Active on AMP and dAMP with ATP as a donor. When GTP is used as phosphate donor, the enzyme phosphorylates AMP, CMP, and to a small extent dCMP. Also displays broad nucleoside diphosphate kinase activity. The polypeptide is Adenylate kinase isoenzyme 5 (Ak5) (Mus musculus (Mouse)).